Consider the following 633-residue polypeptide: MVQMRSKNMAYESGTNNYSDTIANGNTLPPRSKKGHSGRRKRSETLPIACNNFCVTRQIDDDEQAFKMLDKVSHLKKFSAEDGDDNNIFVQWADDITDILFGLCCTGTFLKLLISSALSGRAKTWFDSTTEGIDDHVIKAYSFEKFLALLSEEFDGARSLRREIFTELLTLSIDSEKSLEAFAHKSGRLTPYYLSSGAALDLFLTKLEPQLQKQLENCAFPMTLNLALLITACEFAKRASNHKKYRYKNTRDSDICTPKSKNTAIVSKLSNTKTISKNKVIEKSDKKNYFDKNSQHIPDPKRRKQNEPGMRLFLVMDEEKNILTSRNVSANAYTSKNGHTNLSDLHTNLKNSKSQQCAVEPISILNSGSLVTGTINIDLINDEVLGTKEETTTYDERMDGNSRSLNERCCAVKKNSLQPITSNIFQKNAEIQGTKIGSVLDSGISNSFSSTEYMFPPTSSATVSNPVKKNEISKSSQVKDIAQFNPFMTNEKEKKLNPSESFKSPGVSMEINRLSRIAGLRNIPGNIYEDSKMLNLKTRKCYPLHNFAVRTRSAHFNDRPSNYISPHETINATLRSPASFDSIQCITRSKRVDAETNKATGSAKSENIETKSRKFPEVINPFLVNTTNKKESD.

Residues 12–43 (ESGTNNYSDTIANGNTLPPRSKKGHSGRRKRS) are disordered. Positions 13–29 (SGTNNYSDTIANGNTLP) are enriched in polar residues. Over residues 31 to 42 (RSKKGHSGRRKR) the composition is skewed to basic residues. Helical transmembrane passes span 99 to 118 (ILFG…SSAL) and 217 to 233 (NCAF…ITAC). Residues 593-612 (DAETNKATGSAKSENIETKS) are disordered.

Its subcellular location is the membrane. This is an uncharacterized protein from Saccharomyces cerevisiae (strain ATCC 204508 / S288c) (Baker's yeast).